A 556-amino-acid chain; its full sequence is Glutamine--tRNA ligase (556 aa).

The short motif at 39–49 is the 'HIGH' region element; that stretch reads PEPNGYLHIGH. ATP is bound by residues 40-42 and 46-52; these read EPN and HIGHAKS. L-glutamine is bound by residues aspartate 72 and tyrosine 217. ATP contacts are provided by residues threonine 236 and 267-268; that span reads RL. The short motif at 274–278 is the 'KMSKS' region element; the sequence is LTSKR.

This sequence belongs to the class-I aminoacyl-tRNA synthetase family. As to quaternary structure, monomer.

It localises to the cytoplasm. The enzyme catalyses tRNA(Gln) + L-glutamine + ATP = L-glutaminyl-tRNA(Gln) + AMP + diphosphate. In Haemophilus ducreyi (strain 35000HP / ATCC 700724), this protein is Glutamine--tRNA ligase.